A 241-amino-acid chain; its full sequence is Probable septum site-determining protein MinC (241 aa).

A disordered region spans residues 109 to 135 (PSGARERKVDPSSKTPAKPAEPTYRPT).

Belongs to the MinC family. As to quaternary structure, interacts with MinD and FtsZ.

Cell division inhibitor that blocks the formation of polar Z ring septums. Rapidly oscillates between the poles of the cell to destabilize FtsZ filaments that have formed before they mature into polar Z rings. Prevents FtsZ polymerization. This is Probable septum site-determining protein MinC from Stutzerimonas stutzeri (strain A1501) (Pseudomonas stutzeri).